Consider the following 58-residue polypeptide: Probable mRNA interferase HicA 2 (58 aa).

It belongs to the HicA mRNA interferase family. Probably forms a complex with the cognate antitoxin HicB 2 which inhibits the mRNA interferase activity.

Its function is as follows. Toxic component of a type II toxin-antitoxin (TA) system. A probable translation-independent mRNA interferase. This chain is Probable mRNA interferase HicA 2 (hicA2), found in Photorhabdus laumondii subsp. laumondii (strain DSM 15139 / CIP 105565 / TT01) (Photorhabdus luminescens subsp. laumondii).